The following is a 291-amino-acid chain: MPTLKDIRVRIKGVKSTQQVTKAMKMVAAAKLRRAQERAVMARPYAKKLKEMLGSLSAKVDTSRNPMLSGRSEVNKVLVILVTADRGLCGAFNTNAIKLASKIIHEDYPAIHSKGGVSLICAGSRGFDFFRKREYNIVKGYSAVFQHLDFSTAKEIADIASGMYLRGEVDRVLVAYNEFKSVLAPNLREEVILPIAPEIPGTESSSDYIYEPSPSAIIDELVPKHLNTQIWRMMLESSAAEQAARMSAMDSATENAKELMRTLNISYNRARQAAITTELSEIVSGADALTN.

Belongs to the ATPase gamma chain family. F-type ATPases have 2 components, CF(1) - the catalytic core - and CF(0) - the membrane proton channel. CF(1) has five subunits: alpha(3), beta(3), gamma(1), delta(1), epsilon(1). CF(0) has three main subunits: a, b and c.

Its subcellular location is the cell inner membrane. Functionally, produces ATP from ADP in the presence of a proton gradient across the membrane. The gamma chain is believed to be important in regulating ATPase activity and the flow of protons through the CF(0) complex. The sequence is that of ATP synthase gamma chain from Pelodictyon phaeoclathratiforme (strain DSM 5477 / BU-1).